The sequence spans 628 residues: Venom redulysin 1 (628 aa).

The first 19 residues, 1 to 19, serve as a signal peptide directing secretion; that stretch reads MSKLWLLLLLVAAFQAVHS. A propeptide spanning residues 20-368 is cleaved from the precursor; sequence YPAAESDYLE…EDDVAESDEE (349 aa). The tract at residues 290–313 is disordered; that stretch reads DYEEEEEEEEEEEFELEEDYEEDP. A compositionally biased stretch (acidic residues) spans 291–313; it reads YEEEEEEEEEEEFELEEDYEEDP.

Belongs to the redulysin-like family. Post-translationally, contains 5 disulfide bonds. Expressed by the venom gland (posterior main gland) (at protein level).

The protein localises to the secreted. In terms of biological role, highly abundant protein that may be responsible for the observed disruption of sensory neuron membranes, since it is homologous to proteins such as trialysin, which forms pores in lipid bilayers. Probable insecticidal toxin. The sequence is that of Venom redulysin 1 from Platymeris rhadamanthus (Red spot assassin bug).